The sequence spans 363 residues: Pyrimidine monooxygenase RutA (363 aa).

FMN-binding positions include 49–50 (IK), N115, E124, 140–141 (RY), and S190.

It belongs to the NtaA/SnaA/DszA monooxygenase family. RutA subfamily.

It carries out the reaction uracil + FMNH2 + NADH + O2 = (Z)-3-ureidoacrylate + FMN + NAD(+) + H2O + H(+). The enzyme catalyses thymine + FMNH2 + NADH + O2 = (Z)-2-methylureidoacrylate + FMN + NAD(+) + H2O + H(+). Catalyzes the pyrimidine ring opening between N-3 and C-4 by an unusual flavin hydroperoxide-catalyzed mechanism, adding oxygen atoms in the process to yield ureidoacrylate peracid, that immediately reacts with FMN forming ureidoacrylate and FMN-N(5)-oxide. The FMN-N(5)-oxide reacts spontaneously with NADH to produce FMN. Requires the flavin reductase RutF to regenerate FMN in vivo. The chain is Pyrimidine monooxygenase RutA from Pantoea ananatis (strain LMG 20103).